A 480-amino-acid polypeptide reads, in one-letter code: Glycogen synthase (480 aa).

Lys-15 is a binding site for ADP-alpha-D-glucose.

Belongs to the glycosyltransferase 1 family. Bacterial/plant glycogen synthase subfamily.

The catalysed reaction is [(1-&gt;4)-alpha-D-glucosyl](n) + ADP-alpha-D-glucose = [(1-&gt;4)-alpha-D-glucosyl](n+1) + ADP + H(+). The protein operates within glycan biosynthesis; glycogen biosynthesis. Functionally, synthesizes alpha-1,4-glucan chains using ADP-glucose. In Pasteurella multocida (strain Pm70), this protein is Glycogen synthase.